A 395-amino-acid chain; its full sequence is ATP synthase subunit beta, chloroplastic (395 aa).

Residue 72-79 (GGAGVGKT) participates in ATP binding.

The protein belongs to the ATPase alpha/beta chains family. In terms of assembly, F-type ATPases have 2 components, CF(1) - the catalytic core - and CF(0) - the membrane proton channel. CF(1) has five subunits: alpha(3), beta(3), gamma(1), delta(1), epsilon(1). CF(0) has four main subunits: a(1), b(1), b'(1) and c(9-12).

The protein resides in the plastid. The protein localises to the chloroplast thylakoid membrane. It carries out the reaction ATP + H2O + 4 H(+)(in) = ADP + phosphate + 5 H(+)(out). Its function is as follows. Produces ATP from ADP in the presence of a proton gradient across the membrane. The catalytic sites are hosted primarily by the beta subunits. This chain is ATP synthase subunit beta, chloroplastic, found in Microlepia platyphylla (Plate fern).